A 215-amino-acid polypeptide reads, in one-letter code: Kunitz trypsin inhibitor 2 (215 aa).

A signal peptide spans M1–G23. An intrachain disulfide couples C67 to C114. N-linked (GlcNAc...) asparagine glycosylation is present at N145.

It belongs to the protease inhibitor I3 (leguminous Kunitz-type inhibitor) family. As to quaternary structure, interacts with RD21A. Interacts with RD21B and RD21C. Expressed in vascular bundles of the carpels, the transmitting tract of the style and septum epidermis. Expressed in etiolated seedlings.

The protein resides in the secreted. The protein localises to the cell wall. It localises to the extracellular space. Its subcellular location is the apoplast. It is found in the endoplasmic reticulum. Its function is as follows. Water-soluble and chlorophyll-binding protein that probably does not function as a chloroplast chlorophyll carrier and is not involved in photosynthesis. Involved in the control of cell death in the transmitting tract and septum epidermis during flower development. Binds and inhibits the activity of the cysteine protease RD21A as a pro-death protein. May play a role in herbivore resistance activation during seedling greening. The polypeptide is Kunitz trypsin inhibitor 2 (Arabidopsis thaliana (Mouse-ear cress)).